A 250-amino-acid polypeptide reads, in one-letter code: Eukaryotic translation initiation factor 2 subunit 2 (250 aa).

The C4-type zinc-finger motif lies at 193-217; sequence CHTCKSPETQLTKDTRLFFLQCTNC.

Belongs to the eIF-2-beta/eIF-5 family. As to quaternary structure, eukaryotic translation initiation factor 2 eIF2 is a heterotrimeric complex composed of an alpha, a beta and a gamma subunit.

It localises to the cytoplasm. Its subcellular location is the cytosol. Functionally, component of the eIF2 complex that functions in the early steps of protein synthesis by forming a ternary complex with GTP and initiator tRNA. This complex binds to a 40S ribosomal subunit, followed by mRNA binding to form a 43S pre-initiation complex (43S PIC). Junction of the 60S ribosomal subunit to form the 80S initiation complex is preceded by hydrolysis of the GTP bound to eIF2 and release of an eIF2-GDP binary complex. In order for eIF2 to recycle and catalyze another round of initiation, the GDP bound to eIF2 must exchange with GTP by way of a reaction catalyzed by eIF2B. In Caenorhabditis elegans, this protein is Eukaryotic translation initiation factor 2 subunit 2.